Here is a 682-residue protein sequence, read N- to C-terminus: MSRKQLALFEPTLVVQALKEAVKKLNPQAQWRNPVMFIVWIGSLLTTCISIAMASGVMPGNALFSAAISGWLWVTVLFANFAEALAEGRSKAQANSLKGVKKTAFARKLREPKYGAAADKVPADQLRKGDIVLVEAGDIIPCDGEVIEGGASVDESAITGESAPVIRESGGDFASVTGGTRILSDWLVIECSVNPGETFLDRMIAMVEGAQRRKTPNEIALTILLIALTIVFLLATATLWPFSAWGGNAVSVTVLVALLVCLIPTTIGGLLSAIGVAGMSRMLGANVIATSGRAVEAAGDVDVLLLDKTGTITLGNRQASEFIPAQGVEEKALADAAQLASLADETPEGRSIVILAKQRFNLRERDVQSLHATFVPFTAQSRMSGINIDNRMIRKGSVDAIRRHVEANGGHFPADVDQKVDQVARQGATPLVVVEGSRVLGVIALKDIVKGGIKERFAQLRKMGIKTVMITGDNRLTAAAIAAEAGVDDFLAEATPEAKLALIRQYQAEGRLVAMTGDGTNDAPALAQADVAVAMNSGTQAAKEAGNMVDLDSNPTKLIEVVHIGKQMLMTRGSLTTFSIANDVAKYFAIIPAAFAATYPQLNALNIMRLHSPDSAILSAVIFNALIIVFLIPLALKGVSYKPLTASAMLRRNLWIYGLGGLLVPFIGIKVIDLLLTICGLV.

The next 4 helical transmembrane spans lie at 34-54 (PVMF…IAMA), 62-82 (ALFS…ANFA), 219-239 (IALT…TATL), and 254-274 (VLVA…LSAI). Asp307 serves as the catalytic 4-aspartylphosphate intermediate. Residues Asp344, Glu348, 377–384 (FTAQSRMS), and Lys395 each bind ATP. Mg(2+) contacts are provided by Asp518 and Asp522. Transmembrane regions (helical) follow at residues 588-608 (FAII…LNIM), 616-636 (AILS…PLAL), and 662-682 (LLVP…CGLV).

It belongs to the cation transport ATPase (P-type) (TC 3.A.3) family. Type IA subfamily. As to quaternary structure, the system is composed of three essential subunits: KdpA, KdpB and KdpC.

Its subcellular location is the cell inner membrane. It catalyses the reaction K(+)(out) + ATP + H2O = K(+)(in) + ADP + phosphate + H(+). Part of the high-affinity ATP-driven potassium transport (or Kdp) system, which catalyzes the hydrolysis of ATP coupled with the electrogenic transport of potassium into the cytoplasm. This subunit is responsible for energy coupling to the transport system and for the release of the potassium ions to the cytoplasm. In Escherichia coli O81 (strain ED1a), this protein is Potassium-transporting ATPase ATP-binding subunit.